The sequence spans 271 residues: Mannosyl-3-phosphoglycerate phosphatase (271 aa).

Asp13 functions as the Nucleophile in the catalytic mechanism. 3 residues coordinate Mg(2+): Asp13, Asp15, and Asp214.

This sequence belongs to the HAD-like hydrolase superfamily. MPGP family. Mg(2+) is required as a cofactor.

It localises to the cytoplasm. It carries out the reaction 2-O-(alpha-D-mannosyl)-3-phosphoglycerate + H2O = (2R)-2-O-(alpha-D-mannosyl)-glycerate + phosphate. This chain is Mannosyl-3-phosphoglycerate phosphatase, found in Escherichia coli O81 (strain ED1a).